A 241-amino-acid chain; its full sequence is Biosynthetic peptidoglycan transglycosylase (241 aa).

Residues 18–38 (GVIGIIALWMAGILIFAFLPV) traverse the membrane as a helical segment.

The protein belongs to the glycosyltransferase 51 family.

It localises to the cell inner membrane. The catalysed reaction is [GlcNAc-(1-&gt;4)-Mur2Ac(oyl-L-Ala-gamma-D-Glu-L-Lys-D-Ala-D-Ala)](n)-di-trans,octa-cis-undecaprenyl diphosphate + beta-D-GlcNAc-(1-&gt;4)-Mur2Ac(oyl-L-Ala-gamma-D-Glu-L-Lys-D-Ala-D-Ala)-di-trans,octa-cis-undecaprenyl diphosphate = [GlcNAc-(1-&gt;4)-Mur2Ac(oyl-L-Ala-gamma-D-Glu-L-Lys-D-Ala-D-Ala)](n+1)-di-trans,octa-cis-undecaprenyl diphosphate + di-trans,octa-cis-undecaprenyl diphosphate + H(+). It functions in the pathway cell wall biogenesis; peptidoglycan biosynthesis. Functionally, peptidoglycan polymerase that catalyzes glycan chain elongation from lipid-linked precursors. The polypeptide is Biosynthetic peptidoglycan transglycosylase (Yersinia pestis bv. Antiqua (strain Antiqua)).